The following is a 347-amino-acid chain: Quinolinate synthase (347 aa).

Iminosuccinate-binding residues include H47 and S68. Residue C113 coordinates [4Fe-4S] cluster. Iminosuccinate is bound by residues 139-141 (YAN) and S156. Residue C200 coordinates [4Fe-4S] cluster. Iminosuccinate is bound by residues 226-228 (HPE) and T243. Position 297 (C297) interacts with [4Fe-4S] cluster.

It belongs to the quinolinate synthase family. Type 1 subfamily. The cofactor is [4Fe-4S] cluster.

The protein localises to the cytoplasm. It carries out the reaction iminosuccinate + dihydroxyacetone phosphate = quinolinate + phosphate + 2 H2O + H(+). It participates in cofactor biosynthesis; NAD(+) biosynthesis; quinolinate from iminoaspartate: step 1/1. In terms of biological role, catalyzes the condensation of iminoaspartate with dihydroxyacetone phosphate to form quinolinate. The chain is Quinolinate synthase from Salmonella gallinarum (strain 287/91 / NCTC 13346).